A 354-amino-acid chain; its full sequence is Pyrimidine monooxygenase RutA (354 aa).

FMN-binding positions include 49–50, N115, E124, 140–141, and S189; these read IK and RY.

It belongs to the NtaA/SnaA/DszA monooxygenase family. RutA subfamily.

It carries out the reaction uracil + FMNH2 + NADH + O2 = (Z)-3-ureidoacrylate + FMN + NAD(+) + H2O + H(+). The enzyme catalyses thymine + FMNH2 + NADH + O2 = (Z)-2-methylureidoacrylate + FMN + NAD(+) + H2O + H(+). Catalyzes the pyrimidine ring opening between N-3 and C-4 by an unusual flavin hydroperoxide-catalyzed mechanism, adding oxygen atoms in the process to yield ureidoacrylate peracid, that immediately reacts with FMN forming ureidoacrylate and FMN-N(5)-oxide. The FMN-N(5)-oxide reacts spontaneously with NADH to produce FMN. Requires the flavin reductase RutF to regenerate FMN in vivo. The chain is Pyrimidine monooxygenase RutA from Caulobacter sp. (strain K31).